Here is a 527-residue protein sequence, read N- to C-terminus: Bifunctional methyltransferase (527 aa).

The hemK stretch occupies residues 1–309; the sequence is MQYSIKQVLS…GHSRVILFSP (309 aa). The tract at residues 1-311 is RF MTase; that stretch reads MQYSIKQVLS…SRVILFSPIN (311 aa). Residues 149–153, Asp-172, Trp-201, Asn-216, Glu-356, Glu-381, Asn-408, and Asp-430 each bind S-adenosyl-L-methionine; that span reads GTGSG. 216-219 serves as a coordination point for substrate; that stretch reads NPPY. A tRNA (guanine-N(7)-)-methyltransferase region spans residues 310-527; the sequence is INLNRSYARR…IILQHVSGDH (218 aa). The interval 314–527 is tRNA MTase; sequence RSYARRIGKS…IILQHVSGDH (214 aa). The active site involves Asp-430. Residues Lys-434 and Asp-466 each contribute to the substrate site.

This sequence in the C-terminal section; belongs to the class I-like SAM-binding methyltransferase superfamily. TrmB family. The protein in the N-terminal section; belongs to the protein N5-glutamine methyltransferase family. PrmC subfamily.

It carries out the reaction L-glutaminyl-[peptide chain release factor] + S-adenosyl-L-methionine = N(5)-methyl-L-glutaminyl-[peptide chain release factor] + S-adenosyl-L-homocysteine + H(+). The catalysed reaction is guanosine(46) in tRNA + S-adenosyl-L-methionine = N(7)-methylguanosine(46) in tRNA + S-adenosyl-L-homocysteine. Functionally, methylates the class 1 translation termination release factors RF1/PrfA and RF2/PrfB on the glutamine residue of the universally conserved GGQ motif. Catalyzes the formation of N(7)-methylguanine at position 46 (m7G46) in tRNA. The sequence is that of Bifunctional methyltransferase (prmC/trmB) from Rickettsia felis (strain ATCC VR-1525 / URRWXCal2) (Rickettsia azadi).